The sequence spans 277 residues: Small ribosomal subunit protein uS3 (277 aa).

The KH type-2 domain maps to 38–106; sequence IRRLLATGLE…QVQLNILEVK (69 aa). Residues 217–277 form a disordered region; it reads AGVEAGRGAP…SAPSAETTES (61 aa). Residues 225–235 are compositionally biased toward basic and acidic residues; it reads APDRPRRERPA. The segment covering 242-261 has biased composition (low complexity); sequence SGSSGTTATSTEAGRAAAET.

Belongs to the universal ribosomal protein uS3 family. As to quaternary structure, part of the 30S ribosomal subunit. Forms a tight complex with proteins S10 and S14.

Its function is as follows. Binds the lower part of the 30S subunit head. Binds mRNA in the 70S ribosome, positioning it for translation. This chain is Small ribosomal subunit protein uS3, found in Mycobacteroides abscessus (strain ATCC 19977 / DSM 44196 / CCUG 20993 / CIP 104536 / JCM 13569 / NCTC 13031 / TMC 1543 / L948) (Mycobacterium abscessus).